The primary structure comprises 93 residues: Integration host factor subunit beta (93 aa).

The protein belongs to the bacterial histone-like protein family. In terms of assembly, heterodimer of an alpha and a beta chain.

Functionally, this protein is one of the two subunits of integration host factor, a specific DNA-binding protein that functions in genetic recombination as well as in transcriptional and translational control. The polypeptide is Integration host factor subunit beta (Idiomarina loihiensis (strain ATCC BAA-735 / DSM 15497 / L2-TR)).